The chain runs to 88 residues: Cell division topological specificity factor (88 aa).

Belongs to the MinE family.

In terms of biological role, prevents the cell division inhibition by proteins MinC and MinD at internal division sites while permitting inhibition at polar sites. This ensures cell division at the proper site by restricting the formation of a division septum at the midpoint of the long axis of the cell. This Salmonella agona (strain SL483) protein is Cell division topological specificity factor.